Here is a 520-residue protein sequence, read N- to C-terminus: L-cysteine:1D-myo-inositol 2-amino-2-deoxy-alpha-D-glucopyranoside ligase (520 aa).

Cys-48 is a Zn(2+) binding site. Residues 48–51 (CGIT), Thr-63, and 86–88 (NVT) contribute to the L-cysteinyl-5'-AMP site. The 'HIGH' region motif lies at 50-60 (ITPYDSTHLGH). The 'ERGGDP' region signature appears at 192 to 197 (ERGGDP). Trp-232 serves as a coordination point for L-cysteinyl-5'-AMP. Cys-236 serves as a coordination point for Zn(2+). 254–256 (GED) is an L-cysteinyl-5'-AMP binding site. His-261 lines the Zn(2+) pocket. Residue Ile-288 participates in L-cysteinyl-5'-AMP binding. The 'KMSKS' region motif lies at 294 to 298 (KMSKS).

Belongs to the class-I aminoacyl-tRNA synthetase family. MshC subfamily. In terms of assembly, monomer. It depends on Zn(2+) as a cofactor.

The catalysed reaction is 1D-myo-inositol 2-amino-2-deoxy-alpha-D-glucopyranoside + L-cysteine + ATP = 1D-myo-inositol 2-(L-cysteinylamino)-2-deoxy-alpha-D-glucopyranoside + AMP + diphosphate + H(+). Its function is as follows. Catalyzes the ATP-dependent condensation of GlcN-Ins and L-cysteine to form L-Cys-GlcN-Ins. In Corynebacterium kroppenstedtii (strain DSM 44385 / JCM 11950 / CIP 105744 / CCUG 35717), this protein is L-cysteine:1D-myo-inositol 2-amino-2-deoxy-alpha-D-glucopyranoside ligase.